Reading from the N-terminus, the 318-residue chain is MKVLFIADPMASFKTYKDTTYAMMREMAKRGWRLFHTLSGELSVKNGLVVADASAFEFLGAQDDHDKNWFAAADKVQTALKAFDAVIMRTDPPFDMQYLYATQLLTLAEQQGAKVFNSGQAMRDFNEKLAILNFSRFTAPTLVTTRSADVRAFLKEHGDIIIKPLDGMGGMGIFRLTEKDPNIGSILETLMQLDSRTIMAQRYIPEIVHGDKRILIIGGEVVPYALARIPQNGETRGNLAAGGRGVAQELSERDREIAETLAPELKRRGILLAGLDVIGSNLTEVNVTSPTGFQEIMKQKGFDVAAMFADAVAEWSVR.

Residues Lys-128–Ala-313 enclose the ATP-grasp domain. Residue Leu-154 to Gly-210 participates in ATP binding. Mg(2+) contacts are provided by Glu-284 and Asn-286.

It belongs to the prokaryotic GSH synthase family. It depends on Mg(2+) as a cofactor. The cofactor is Mn(2+).

It catalyses the reaction gamma-L-glutamyl-L-cysteine + glycine + ATP = glutathione + ADP + phosphate + H(+). Its pathway is sulfur metabolism; glutathione biosynthesis; glutathione from L-cysteine and L-glutamate: step 2/2. In Neisseria meningitidis serogroup A / serotype 4A (strain DSM 15465 / Z2491), this protein is Glutathione synthetase.